Here is a 591-residue protein sequence, read N- to C-terminus: Autotransporter adhesin NhhA (591 aa).

The signal sequence occupies residues 1 to 51; the sequence is MNKIYRIIWNSALNAWVVVSELTRNHTKRASATVKTAVLATLLFATVQASA. Positions 52 to 503 are surface exposed passenger domain; that stretch reads NNEEQEEDLY…TNVAQLKGVA (452 aa). The interval 504 to 591 is translocator domain; sequence QNLNNRIDNV…GASASVGYQW (88 aa). 4 consecutive transmembrane segments (beta stranded) span residues 537 to 547, 551 to 561, 570 to 576, and 580 to 591; these read GKSMMAIGGGT, EAGYAIGYSSI, KGTASGN, and HFGASASVGYQW.

This sequence belongs to the autotransporter-2 (AT-2) (TC 1.B.40) family. In terms of assembly, homotrimer.

It is found in the cell surface. The protein localises to the cell outer membrane. Involved in adhesion of capsulated meningococci to host epithelial cells. Interacts with laminin and heparan sulfate, promoting the adherence to the extracellular matrix (ECM) components. This is Autotransporter adhesin NhhA from Neisseria meningitidis serogroup B (strain ATCC BAA-335 / MC58).